Here is a 123-residue protein sequence, read N- to C-terminus: Large ribosomal subunit protein bL12 (123 aa).

It belongs to the bacterial ribosomal protein bL12 family. As to quaternary structure, homodimer. Part of the ribosomal stalk of the 50S ribosomal subunit. Forms a multimeric L10(L12)X complex, where L10 forms an elongated spine to which 2 to 4 L12 dimers bind in a sequential fashion. Binds GTP-bound translation factors.

Forms part of the ribosomal stalk which helps the ribosome interact with GTP-bound translation factors. Is thus essential for accurate translation. This is Large ribosomal subunit protein bL12 from Albidiferax ferrireducens (strain ATCC BAA-621 / DSM 15236 / T118) (Rhodoferax ferrireducens).